The chain runs to 562 residues: MIIIAFSILDFKNKEAQNFDFKAGTNLIVSKGNTKGKSSLLKSMYYTLGFDVHQFPSNWNINFMYFQIEVLINNVKYNITRQKNIFRVSDVEVPLNVKEYSEWLQHKLEIKMQLANTHTKHLYEAYSSAVILPFYIDQDDSWDGGIYRNVTNTLNQYTRIPADIFKSVFNLSNYELLELQNSLTNYSKEKNTVVSTIKSLLNVLEDYRHENADVPTVSKIDKIALNKDIDRYLQMQNELNEQIVKYKMKLLNKQEMLDLQKQELSELEQLLKMNKKRYNSIETECQYCHSKLTKEQSLTRLDLSNNYFEISLLKEEIEKEVVKLTNEIIIFESQQNSIESKIDEIHRRIQNSKDLLTIDDYVKATAKKEASNELESLVDKQVLSKYNLEEKIKVLRREINKLKKEKESLREIIERDYTDLVFEIKKVLNDLNDTKLDLSELNLDELKFLEFKKISGSGMDKNKKFLAYYLIYFSLLRKYSSYIIPFCMDSFIKNEITGETAKKMFEAIEKYFFDTNQSFFSIVSENLKHLEFVDSYNKINVEGKLLVRDKYDEIALKFKFDS.

Component of antiviral defense system Lamassu type I, composed of LmuA and LmuB. Expression of Lamassu type I in B.subtilis (strain BEST7003) confers resistance to phages phi3T, SpBeta and SPR. May be an ATPase. In Bacillus sp. (strain NCIM 5461 / CCTCC AB 2011126 / NIO-1130), this protein is Lamassu protein LmuB.